We begin with the raw amino-acid sequence, 111 residues long: Large ribosomal subunit protein eL34B (111 aa).

A Phosphotyrosine modification is found at Tyr-76.

It belongs to the eukaryotic ribosomal protein eL34 family. In terms of assembly, component of the large ribosomal subunit (LSU). Mature yeast ribosomes consist of a small (40S) and a large (60S) subunit. The 40S small subunit contains 1 molecule of ribosomal RNA (18S rRNA) and at least 33 different proteins. The large 60S subunit contains 3 rRNA molecules (25S, 5.8S and 5S rRNA) and at least 46 different proteins.

It localises to the cytoplasm. The protein localises to the nucleus. Its subcellular location is the nucleolus. Component of the ribosome, a large ribonucleoprotein complex responsible for the synthesis of proteins in the cell. The small ribosomal subunit (SSU) binds messenger RNAs (mRNAs) and translates the encoded message by selecting cognate aminoacyl-transfer RNA (tRNA) molecules. The large subunit (LSU) contains the ribosomal catalytic site termed the peptidyl transferase center (PTC), which catalyzes the formation of peptide bonds, thereby polymerizing the amino acids delivered by tRNAs into a polypeptide chain. The nascent polypeptides leave the ribosome through a tunnel in the LSU and interact with protein factors that function in enzymatic processing, targeting, and the membrane insertion of nascent chains at the exit of the ribosomal tunnel. In Schizosaccharomyces pombe (strain 972 / ATCC 24843) (Fission yeast), this protein is Large ribosomal subunit protein eL34B (rpl3402).